The sequence spans 236 residues: Leucyl/phenylalanyl-tRNA--protein transferase (236 aa).

Belongs to the L/F-transferase family.

The protein localises to the cytoplasm. The enzyme catalyses N-terminal L-lysyl-[protein] + L-leucyl-tRNA(Leu) = N-terminal L-leucyl-L-lysyl-[protein] + tRNA(Leu) + H(+). It catalyses the reaction N-terminal L-arginyl-[protein] + L-leucyl-tRNA(Leu) = N-terminal L-leucyl-L-arginyl-[protein] + tRNA(Leu) + H(+). The catalysed reaction is L-phenylalanyl-tRNA(Phe) + an N-terminal L-alpha-aminoacyl-[protein] = an N-terminal L-phenylalanyl-L-alpha-aminoacyl-[protein] + tRNA(Phe). Functions in the N-end rule pathway of protein degradation where it conjugates Leu, Phe and, less efficiently, Met from aminoacyl-tRNAs to the N-termini of proteins containing an N-terminal arginine or lysine. The sequence is that of Leucyl/phenylalanyl-tRNA--protein transferase from Shewanella loihica (strain ATCC BAA-1088 / PV-4).